An 87-amino-acid polypeptide reads, in one-letter code: MANIKSAQKRIKVIAKKTARNRMIKSQLKTAIKRFEEAVEAGNLEEAKVKLTFVEKKLSQAAAKGTVHKSSASRKISRLAIRLNKAI.

This sequence belongs to the bacterial ribosomal protein bS20 family.

Its function is as follows. Binds directly to 16S ribosomal RNA. This is Small ribosomal subunit protein bS20 from Alkaliphilus metalliredigens (strain QYMF).